We begin with the raw amino-acid sequence, 275 residues long: Dermonecrotic toxin SpeSicTox-betaIIA2ii (275 aa).

Residue histidine 5 is part of the active site. Glutamate 25 and aspartate 27 together coordinate Mg(2+). Histidine 41 acts as the Nucleophile in catalysis. 2 disulfides stabilise this stretch: cysteine 45/cysteine 51 and cysteine 47/cysteine 190. Aspartate 85 provides a ligand contact to Mg(2+).

It belongs to the arthropod phospholipase D family. Class II subfamily. Mg(2+) serves as cofactor. In terms of tissue distribution, expressed by the venom gland.

It is found in the secreted. It catalyses the reaction an N-(acyl)-sphingosylphosphocholine = an N-(acyl)-sphingosyl-1,3-cyclic phosphate + choline. The catalysed reaction is an N-(acyl)-sphingosylphosphoethanolamine = an N-(acyl)-sphingosyl-1,3-cyclic phosphate + ethanolamine. It carries out the reaction a 1-acyl-sn-glycero-3-phosphocholine = a 1-acyl-sn-glycero-2,3-cyclic phosphate + choline. The enzyme catalyses a 1-acyl-sn-glycero-3-phosphoethanolamine = a 1-acyl-sn-glycero-2,3-cyclic phosphate + ethanolamine. In terms of biological role, dermonecrotic toxins cleave the phosphodiester linkage between the phosphate and headgroup of certain phospholipids (sphingolipid and lysolipid substrates), forming an alcohol (often choline) and a cyclic phosphate. This toxin acts on sphingomyelin (SM). It may also act on ceramide phosphoethanolamine (CPE), lysophosphatidylcholine (LPC) and lysophosphatidylethanolamine (LPE), but not on lysophosphatidylserine (LPS), and lysophosphatidylglycerol (LPG). It acts by transphosphatidylation, releasing exclusively cyclic phosphate products as second products. Induces dermonecrosis, hemolysis, increased vascular permeability, edema, inflammatory response, and platelet aggregation. The sequence is that of Dermonecrotic toxin SpeSicTox-betaIIA2ii from Sicarius peruensis (Six-eyed sand spider).